The primary structure comprises 166 residues: MSGKIGLYTGSFDPVTNGHMDMIKRASHLFEHVYVGIFNNPNKQSFFTFELRAQMLREAVCALPNVTVVSAEHGLAVDLARELSVTHLIRGLRNTADFDYEAGLEYFNHRLAPDIETIYLMANHDLQPISSSRIRELIAFRAPITGLVPQAVINQVEKMNENNKKI.

Ser-11 provides a ligand contact to substrate. ATP is bound by residues 11 to 12 (SF) and His-19. Substrate contacts are provided by Lys-43, Ala-76, and Arg-90. ATP-binding positions include 91 to 93 (GLR), Glu-101, and 126 to 132 (LQPISSS).

The protein belongs to the bacterial CoaD family. As to quaternary structure, homohexamer. The cofactor is Mg(2+).

It is found in the cytoplasm. It catalyses the reaction (R)-4'-phosphopantetheine + ATP + H(+) = 3'-dephospho-CoA + diphosphate. The protein operates within cofactor biosynthesis; coenzyme A biosynthesis; CoA from (R)-pantothenate: step 4/5. Reversibly transfers an adenylyl group from ATP to 4'-phosphopantetheine, yielding dephospho-CoA (dPCoA) and pyrophosphate. The chain is Phosphopantetheine adenylyltransferase from Streptococcus equi subsp. zooepidemicus (strain MGCS10565).